A 508-amino-acid polypeptide reads, in one-letter code: Photosystem II CP47 reaction center protein (508 aa).

The next 6 helical transmembrane spans lie at 21–36 (AVHLMHTALVSGWAGS), 101–115 (IVLSGLLFLAAIWHW), 140–156 (GIHLFLSGVLCFGFGAF), 203–218 (IAAGILGILAGLFHLS), 237–252 (VLSSSIAAVFFAAFVV), and 457–472 (CFALLFFFGHLWHGSR).

It belongs to the PsbB/PsbC family. PsbB subfamily. PSII is composed of 1 copy each of membrane proteins PsbA, PsbB, PsbC, PsbD, PsbE, PsbF, PsbH, PsbI, PsbJ, PsbK, PsbL, PsbM, PsbT, PsbX, PsbY, PsbZ, Psb30/Ycf12, at least 3 peripheral proteins of the oxygen-evolving complex and a large number of cofactors. It forms dimeric complexes. Binds multiple chlorophylls. PSII binds additional chlorophylls, carotenoids and specific lipids. serves as cofactor.

The protein localises to the plastid. Its subcellular location is the chloroplast thylakoid membrane. Its function is as follows. One of the components of the core complex of photosystem II (PSII). It binds chlorophyll and helps catalyze the primary light-induced photochemical processes of PSII. PSII is a light-driven water:plastoquinone oxidoreductase, using light energy to abstract electrons from H(2)O, generating O(2) and a proton gradient subsequently used for ATP formation. The sequence is that of Photosystem II CP47 reaction center protein from Zygnema circumcarinatum (Green alga).